Consider the following 247-residue polypeptide: 2,3-bisphosphoglycerate-dependent phosphoglycerate mutase (247 aa).

Substrate contacts are provided by residues 8-15, 21-22, arginine 60, 87-90, lysine 98, 114-115, and 183-184; these read RHGESTWN, TG, ERHY, RR, and GN. The Tele-phosphohistidine intermediate role is filled by histidine 9. Glutamate 87 acts as the Proton donor/acceptor in catalysis.

Belongs to the phosphoglycerate mutase family. BPG-dependent PGAM subfamily. Homodimer.

It catalyses the reaction (2R)-2-phosphoglycerate = (2R)-3-phosphoglycerate. It functions in the pathway carbohydrate degradation; glycolysis; pyruvate from D-glyceraldehyde 3-phosphate: step 3/5. Its function is as follows. Catalyzes the interconversion of 2-phosphoglycerate and 3-phosphoglycerate. This chain is 2,3-bisphosphoglycerate-dependent phosphoglycerate mutase, found in Leptothrix cholodnii (strain ATCC 51168 / LMG 8142 / SP-6) (Leptothrix discophora (strain SP-6)).